We begin with the raw amino-acid sequence, 92 residues long: Cell division protein FtsB (92 aa).

At 1-3 (MRL) the chain is on the cytoplasmic side. The helical transmembrane segment at 4–21 (FVFFMLCLLVLLQYHLWF) threads the bilayer. At 22 to 92 (GKNGLGDRHN…TFFRIVPKED (71 aa)) the chain is on the periplasmic side. Positions 28–62 (DRHNLQEEVTLILENNSELRQRNQMMFSEIKDLKE) form a coiled coil.

Belongs to the FtsB family. In terms of assembly, part of a complex composed of FtsB, FtsL and FtsQ.

It is found in the cell inner membrane. In terms of biological role, essential cell division protein. May link together the upstream cell division proteins, which are predominantly cytoplasmic, with the downstream cell division proteins, which are predominantly periplasmic. The sequence is that of Cell division protein FtsB from Psychromonas ingrahamii (strain DSM 17664 / CCUG 51855 / 37).